The primary structure comprises 235 residues: Retron Ec48 transmembrane protein (235 aa).

Transmembrane regions (helical) follow at residues 11–31 (IVGVSSALFLIFSLISLFETI) and 64–84 (AFGWLITTFVTVFGVMIALMT).

Its subcellular location is the cell inner membrane. Membrane component of antiviral defense system Retron Ec48, composed of a non-coding RNA (ncRNA), a reverse transcriptase (RT) and this membrane protein. Expression of this retron confers protection against bacteriophages lambda, T2, T4, T5 and T7. At multiplicity of infection (MOI) of 0.02 cultures grow normally when infected with lambda without collapsing, at MOI 2 cultures enter growth stasis. At MOI 3 cell membranes are permeabilized within 15 minutes of infection but do not lyse, suggesting the phage are not able to finish a replication cycle. Antiviral defense is suppressed by mutations that knockout the lambda gam expression or phage T7 gp5.9 expression; both viral genes inhibit host RecBCD. The Ec48 retron may sense the integrity of the RecBCD enzyme; when RecBCD is perturbed by viral proteins the Ec48 effector (the membrane protein) is activated, leading to abortive infection and bacterial growth arrest. In Escherichia coli, this protein is Retron Ec48 transmembrane protein.